The sequence spans 125 residues: MARISGIDLPNNKQLKIALTSIYGIGRTRALEVCNKSSISPSKIAKDLDNDEVNRLRKVIESDYIVEGKLRSEVAMSIKRLMDIACYRGVRHRKGLPLRGQRTKTNARTRKGKRKTVANKKIASK.

The segment at 95–125 (GLPLRGQRTKTNARTRKGKRKTVANKKIASK) is disordered.

It belongs to the universal ribosomal protein uS13 family. As to quaternary structure, part of the 30S ribosomal subunit. Forms a loose heterodimer with protein S19. Forms two bridges to the 50S subunit in the 70S ribosome.

In terms of biological role, located at the top of the head of the 30S subunit, it contacts several helices of the 16S rRNA. In the 70S ribosome it contacts the 23S rRNA (bridge B1a) and protein L5 of the 50S subunit (bridge B1b), connecting the 2 subunits; these bridges are implicated in subunit movement. Contacts the tRNAs in the A and P-sites. This Borreliella burgdorferi (strain ATCC 35210 / DSM 4680 / CIP 102532 / B31) (Borrelia burgdorferi) protein is Small ribosomal subunit protein uS13.